A 446-amino-acid chain; its full sequence is Regulator of drug sensitivity 2 (446 aa).

A DNA-binding region (zn(2)-C6 fungal-type) is located at residues 15 to 45; sequence KTCLFCKRSHVVCDKQRPCSRCVKRDIAHLC. 2 disordered regions span residues 52–106 and 158–218; these read VPNE…PKLD and ASNV…KEES. Composition is skewed to polar residues over residues 56 to 70 and 84 to 96; these read MPSQ…NNIQ and DYQN…SGST. Serine 102 is subject to Phosphoserine. The span at 160-177 shows a compositional bias: polar residues; it reads NVHLENGSQTTQSPLEYQ. Over residues 178-192 the composition is skewed to basic and acidic residues; that stretch reads NDNRRDEIGVARQEN. Over residues 193–206 the composition is skewed to polar residues; that stretch reads RSPTIMSGSSNSIS. The span at 207-218 shows a compositional bias: basic and acidic residues; sequence KGDKQDQEKEES. Phosphothreonine is present on threonine 231.

Phosphorylated by SNF1 in absence of glucose. The phosphorylation is required for induction of transcription of gluconeogenic genes.

Its subcellular location is the cytoplasm. The protein resides in the nucleus. Its function is as follows. Transcription factor which regulates the expression of genes for gluconeogenesis, the TCA cycle, and glucose metabolism. Involved in the cell wall remodeling process and drug resistance. In Saccharomyces cerevisiae (strain ATCC 204508 / S288c) (Baker's yeast), this protein is Regulator of drug sensitivity 2 (RDS2).